Reading from the N-terminus, the 140-residue chain is HTH-type transcriptional regulator YfmP (140 aa).

The 73-residue stretch at 1–73 folds into the HTH merR-type domain; sequence MEWMKIDQVA…LQELQHFMET (73 aa). Positions 6-25 form a DNA-binding region, H-T-H motif; it reads IDQVAKRSGLTKRTIRFYEE.

Its function is as follows. Repressor of the yfmOP operon. A mutation in yfmP leads to overexpression of yfmO, probably causing a decrease in cellular copper that is eventually responsible for a reduced copper induction of copZA. The sequence is that of HTH-type transcriptional regulator YfmP (yfmP) from Bacillus subtilis (strain 168).